The primary structure comprises 247 residues: Triosephosphate isomerase (247 aa).

Asn10 and Lys12 together coordinate substrate. The Electrophile role is filled by His94. Glu164 acts as the Proton acceptor in catalysis.

This sequence belongs to the triosephosphate isomerase family. As to quaternary structure, homodimer.

It localises to the cytoplasm. It carries out the reaction D-glyceraldehyde 3-phosphate = dihydroxyacetone phosphate. The enzyme catalyses dihydroxyacetone phosphate = methylglyoxal + phosphate. It functions in the pathway carbohydrate biosynthesis; gluconeogenesis. The protein operates within carbohydrate degradation; glycolysis; D-glyceraldehyde 3-phosphate from glycerone phosphate: step 1/1. Functionally, triosephosphate isomerase is an extremely efficient metabolic enzyme that catalyzes the interconversion between dihydroxyacetone phosphate (DHAP) and D-glyceraldehyde-3-phosphate (G3P) in glycolysis and gluconeogenesis. In terms of biological role, it is also responsible for the non-negligible production of methylglyoxal a reactive cytotoxic side-product that modifies and can alter proteins, DNA and lipids. The chain is Triosephosphate isomerase from Latimeria chalumnae (Coelacanth).